Consider the following 433-residue polypeptide: Cell adhesion molecule 2 (433 aa).

The signal sequence occupies residues 1 to 24; the sequence is MILQPSALLCLSSLWGVIVQASQG. The Extracellular portion of the chain corresponds to 25-365; it reads QFPVTQNVTV…ALPGPVATDH (341 aa). Residues 27-114 form the Ig-like V-type domain; the sequence is PVTQNVTVVE…SLFTMPVKTS (88 aa). N-linked (GlcNAc...) asparagine glycans are attached at residues Asn-31, Asn-41, and Asn-51. 3 disulfide bridges follow: Cys-44-Cys-104, Cys-146-Cys-203, and Cys-248-Cys-296. Ig-like C2-type domains lie at 127–217 and 227–312; these read PHIS…PQIA and PTVR…YVLI. Residues Asn-287 and Asn-291 are each glycosylated (N-linked (GlcNAc...) asparagine). The chain crosses the membrane as a helical span at residues 366–386; that stretch reads ALIGGVVAVVVFVTLCSIILI. Topologically, residues 387-433 are cytoplasmic; that stretch reads GRYLARHKGTYLTNEAKGAEDAPDADTAIINAEGSQVNAEEKKEYFI.

This sequence belongs to the nectin family.

Its subcellular location is the membrane. The polypeptide is Cell adhesion molecule 2 (cadm2) (Xenopus tropicalis (Western clawed frog)).